The chain runs to 481 residues: GTPase Der (481 aa).

EngA-type G domains lie at proline 3–phenylalanine 166 and isoleucine 194–threonine 367. GTP-binding positions include glycine 9 to serine 16, aspartate 56 to isoleucine 60, asparagine 118 to aspartate 121, glycine 200 to serine 207, aspartate 247 to valine 251, and asparagine 312 to aspartate 315. Residues lysine 368 to asparagine 452 enclose the KH-like domain.

The protein belongs to the TRAFAC class TrmE-Era-EngA-EngB-Septin-like GTPase superfamily. EngA (Der) GTPase family. As to quaternary structure, associates with the 50S ribosomal subunit.

GTPase that plays an essential role in the late steps of ribosome biogenesis. This is GTPase Der from Alteromonas mediterranea (strain DSM 17117 / CIP 110805 / LMG 28347 / Deep ecotype).